Consider the following 82-residue polypeptide: Mu-conotoxin MrVIA (82 aa).

The first 22 residues, 1 to 22, serve as a signal peptide directing secretion; that stretch reads MKLTCMMIVAVLFLTAWTLVMA. The propeptide occupies 23–49; the sequence is DDSNNGLANHFSKSRDEMEDPEASKLE. Intrachain disulfides connect C53/C71, C60/C76, and C70/C81.

In terms of tissue distribution, expressed by the venom duct.

It is found in the secreted. MuO-conotoxins are gating-modifier toxins that inhibit sodium current by trapping the domain II voltage sensor in the closed position to prevent opening of the sodium channel. This toxin inhibits rNav1.2/SCN2A (IC(50)=532 nM), rNav1.4/SCN4A (IC(50)=438 nM) and rNav1.7/SCN9A (IC(50)=345 nM). It blocks Nav channels by interacting mainly with the C-terminal part of the pore loop of domain-3. It does not bind on site 1. At small concentration, this toxin also acts as a calcium current agonist, whereas at higher doses it blocks fast-inactivating calcium current. This Conus marmoreus (Marble cone) protein is Mu-conotoxin MrVIA.